Reading from the N-terminus, the 183-residue chain is ATP synthase subunit b, chloroplastic (183 aa).

A helical membrane pass occupies residues 27–49 (LATNLINLTVVVGVLIFFGKGVL).

This sequence belongs to the ATPase B chain family. In terms of assembly, F-type ATPases have 2 components, F(1) - the catalytic core - and F(0) - the membrane proton channel. F(1) has five subunits: alpha(3), beta(3), gamma(1), delta(1), epsilon(1). F(0) has four main subunits: a(1), b(1), b'(1) and c(10-14). The alpha and beta chains form an alternating ring which encloses part of the gamma chain. F(1) is attached to F(0) by a central stalk formed by the gamma and epsilon chains, while a peripheral stalk is formed by the delta, b and b' chains.

Its subcellular location is the plastid. The protein localises to the chloroplast thylakoid membrane. Its function is as follows. F(1)F(0) ATP synthase produces ATP from ADP in the presence of a proton or sodium gradient. F-type ATPases consist of two structural domains, F(1) containing the extramembraneous catalytic core and F(0) containing the membrane proton channel, linked together by a central stalk and a peripheral stalk. During catalysis, ATP synthesis in the catalytic domain of F(1) is coupled via a rotary mechanism of the central stalk subunits to proton translocation. Component of the F(0) channel, it forms part of the peripheral stalk, linking F(1) to F(0). The protein is ATP synthase subunit b, chloroplastic of Hordeum vulgare (Barley).